The chain runs to 240 residues: MRPSGRAVDSLRSIVLEPGYSKHAEGSCMARFGDTHVLCTASIEERVPGWMRGGGKGWVTAEYGMLPRSTHTRTDREAARGRQSGRTQEIQRLIGRSLRSVTDLKKIGEIQIRLDCDVIQADGGTRTAAITGSWVALYQALARFEKLGLGALPPLTDHVAAVSCGLCDGVAVLDLDYAEDSTAQADANFVLTGTGGIVEIQGTAETSPFAQAQFMELLALAQKGITELVALQKAALASLR.

Phosphate contacts are provided by residues R86 and 124–126; that span reads GTR.

This sequence belongs to the RNase PH family. Homohexameric ring arranged as a trimer of dimers.

The catalysed reaction is tRNA(n+1) + phosphate = tRNA(n) + a ribonucleoside 5'-diphosphate. Functionally, phosphorolytic 3'-5' exoribonuclease that plays an important role in tRNA 3'-end maturation. Removes nucleotide residues following the 3'-CCA terminus of tRNAs; can also add nucleotides to the ends of RNA molecules by using nucleoside diphosphates as substrates, but this may not be physiologically important. Probably plays a role in initiation of 16S rRNA degradation (leading to ribosome degradation) during starvation. The chain is Ribonuclease PH from Rhodospirillum rubrum (strain ATCC 11170 / ATH 1.1.1 / DSM 467 / LMG 4362 / NCIMB 8255 / S1).